Consider the following 242-residue polypeptide: Small ribosomal subunit protein uS2 (242 aa).

Belongs to the universal ribosomal protein uS2 family.

The sequence is that of Small ribosomal subunit protein uS2 from Vibrio campbellii (strain ATCC BAA-1116).